Consider the following 1008-residue polypeptide: Collagen, type I, alpha 1a (1008 aa).

Residues 1–21 show a composition bias toward pro residues; sequence SPAMPVPGPMGPMGPRGPPGS. Residues 1 to 920 form a disordered region; it reads SPAMPVPGPM…PQEKAPDPFR (920 aa). Basic and acidic residues predominate over residues 39–53; the sequence is NGEDGESGKPGRGGE. Positions 92-117 are enriched in low complexity; sequence TPGAMGPRGAAGAAGARGNDGAAGAA. Pro residues predominate over residues 119-132; it reads PPGPTGPAGPPGFP. Residues 133–151 show a composition bias toward gly residues; sequence GGPGAKGDAGAQGGRGPEG. Composition is skewed to low complexity over residues 152–195 and 204–230; these read PAGA…AGAP and SGPQ…APGV. The span at 253 to 265 shows a compositional bias: gly residues; sequence GARGGPGGRGFPG. Composition is skewed to low complexity over residues 339-354 and 410-422; these read VGAR…PGPK and LPGE…PAGA. Positions 423 to 435 are enriched in basic and acidic residues; sequence RGDRGFPGERGAK. 3 stretches are compositionally biased toward low complexity: residues 437 to 456, 489 to 524, and 537 to 573; these read DAGA…QGMP, RGLT…ARGA, and AGFA…AGPT. Over residues 604–617 the composition is skewed to pro residues; that stretch reads PPGPSGNPGPPGPA. The segment covering 634–661 has biased composition (low complexity); sequence PAGRPGELGAAGPPGPAGEKGSPGSEGA. Gly residues predominate over residues 696 to 709; the sequence is GEAGGPSGPGGERG. Low complexity predominate over residues 717-735; that stretch reads PGLAGAPGEPGREGSPGNE. Residues 761–771 are compositionally biased toward pro residues; it reads APGPPGAPGPV. Residues 785-806 show a composition bias toward low complexity; the sequence is PAGPAGSAGPSGPRGPAGAPGL. Positions 807-821 are enriched in basic and acidic residues; sequence RGDKGESGEAGERRG. The segment covering 832-868 has biased composition (low complexity); sequence SGSSGEQGPAGAAGPAGPRGPAGSAGSPGKDGMSGLP. A compositionally biased stretch (pro residues) spans 884 to 896; that stretch reads AGPPGPPGPPGAP. Residues 978–1008 form the Fibrillar collagen NC1 domain; that stretch reads TSRLPLLDLAPMDVGAPDQEFGLEVGPVCFL.

The protein belongs to the fibrillar collagen family.

It is found in the secreted. It localises to the extracellular space. The protein resides in the extracellular matrix. This Epinephelus aeneus (White grouper) protein is Collagen, type I, alpha 1a.